A 462-amino-acid polypeptide reads, in one-letter code: Amino-acid permease AapA (462 aa).

The next 12 membrane-spanning stretches (helical) occupy residues L27–H47, F48–M68, A96–L116, L134–F154, W160–I180, G209–L229, I252–L272, F279–V299, A343–E363, F366–I386, P410–A430, and I435–T455.

It belongs to the amino acid-polyamine-organocation (APC) superfamily.

The protein localises to the cell membrane. Probable amino-acid or metabolite transport protein. This Bacillus subtilis (strain 168) protein is Amino-acid permease AapA (aapA).